The sequence spans 302 residues: Recombination-associated protein RdgC (302 aa).

Belongs to the RdgC family.

The protein resides in the cytoplasm. It is found in the nucleoid. Functionally, may be involved in recombination. In Proteus mirabilis (strain HI4320), this protein is Recombination-associated protein RdgC.